A 197-amino-acid polypeptide reads, in one-letter code: MQERKAAVNRDTLETQISVALNLDGTGAAAFATGVPFLEHMMDQIARHGMIDLDVRCQGDTHIDDHHSVEDIGITIGQAMHQAVGDKRGIRRYGHAYVPLDEALSRVVIDFSGRPGLEMHIPFTQKRIGSFDTELFWEFFQGFVNHAGVTLHIDCLRGHNAHHQIETVFKAFGRALRMALEVDPRMGNAMPSTKGTL.

It belongs to the imidazoleglycerol-phosphate dehydratase family.

Its subcellular location is the cytoplasm. It catalyses the reaction D-erythro-1-(imidazol-4-yl)glycerol 3-phosphate = 3-(imidazol-4-yl)-2-oxopropyl phosphate + H2O. Its pathway is amino-acid biosynthesis; L-histidine biosynthesis; L-histidine from 5-phospho-alpha-D-ribose 1-diphosphate: step 6/9. The polypeptide is Imidazoleglycerol-phosphate dehydratase (Teredinibacter turnerae (strain ATCC 39867 / T7901)).